A 369-amino-acid polypeptide reads, in one-letter code: Probable methyltransferase TCM_000331 (369 aa).

Tyrosine 18, cysteine 60, asparagine 65, aspartate 98, leucine 99, serine 137, and phenylalanine 138 together coordinate S-adenosyl-L-homocysteine. The Mg(2+) site is built by asparagine 176, aspartate 261, phenylalanine 263, and asparagine 264.

The protein belongs to the methyltransferase superfamily. Type-7 methyltransferase family. It depends on Mg(2+) as a cofactor.

This chain is Probable methyltransferase TCM_000331, found in Theobroma cacao (Cacao).